The chain runs to 1004 residues: MGGEEKILVSVRVRPLNEKEKTRNDRCDWECINDTTIICKFHNLPDKSSYTFDKVFGFECPTKQVYDDGAKEVALCVLSGINSSIFAYGQTSSGKTYTMSGITEFAMDDIFAYIDKHKQERKFTLKFSAMEIYNEAVRDLLCEDSSTPLRLLDDPERGTVVEKLREETLRDRSHLEELLSICETQRKIGETSLNEISSRSHQILRLTIESSSQQFSPESSATLAASVCFVDLAGSERASQTLSAGSRLKEGCHINRSLLTLGTVIRKLSKGKNGHIPYRDSKLTRILQNSLGGNARTAIICTMSPARSHLEQSRNTLLFATCAKEVTTNAQVNLVVSEKALVKQLQRELARMENELKNLGPASASSTSDFYALMLKQKEELIAKMEEQIHELKWQRDVAQSRVENLLKSTAEERSSSSSMDSRRRRISYDSTDFDEPRMLNNLGKSNLYSPDEDGFLLDDTTPQFPGHNLHDKWEEMAQSTTQEPEDACKEVRCIEVNSGEAERVQIQDSLDDIVEKKEYEQNYESQKDDADSSIKNIDMELSLYTKPEAEDGVSVKKLIEDVQETEQSVEKQKQSPKKEEMEQYLSRDMSEQVTKSLPEEEQCVQEYGAYDKLEAQDVLTINKLEESQQTEQSVEKEDTKKNLSSKKEDLKQNLSMDQSEQLYKSPPEDEKCVEVYEGSDKDDNTYEALKKKVKEMQKTIEYFMSIQSAEEKQSPSFNIIDDTLSPGEYFKMRRSRSCRENLLFTKAAAAAASRGFIFETTNTSFDSDITVSMDAQSIKDSDTETSSSSFHEFMAGLRERTMQHHSTHSDDTDTKTMKPENTDDGGEKTEFERQQSQIIELWQVCNVPLVHRTYFFLLFKGDPSDFVYMEVELRRLSFLKDSTETSRKQTAKAVTREREWLAKQIPNKFGKKEKEEVYKKWGVELSSKRRSLQVTHKLWNNNTKDIEHCKESASLIATLVGFVDSTLTPKEMFGLSLTPTTFNIKPSSGWKFSNSFSRISFTG.

In terms of domain architecture, Kinesin motor spans 6–326; the sequence is KILVSVRVRP…LLFATCAKEV (321 aa). 89 to 96 contributes to the ATP binding site; it reads GQTSSGKT. Coiled coils occupy residues 335-402, 517-576, and 634-661; these read VVSE…AQSR, KKEY…QKQS, and SVEKEDTKKNLSSKKEDLKQNLSMDQSE. Disordered stretches follow at residues 567–599, 628–671, and 802–830; these read EQSVEKQKQSPKKEEMEQYLSRDMSEQVTKSLP, SQQT…PEDE, and TMQHHSTHSDDTDTKTMKPENTDDGGEKT. Composition is skewed to basic and acidic residues over residues 569-582 and 634-652; these read SVEKQKQSPKKEEM and SVEKEDTKKNLSSKKEDLK. Residues 653-663 show a composition bias toward polar residues; the sequence is QNLSMDQSEQL. Residue Lys881 forms a Glycyl lysine isopeptide (Lys-Gly) (interchain with G-Cter in ubiquitin) linkage.

The protein belongs to the TRAFAC class myosin-kinesin ATPase superfamily. Kinesin family. KIN-7 subfamily.

The protein is Kinesin-like protein KIN-7I of Arabidopsis thaliana (Mouse-ear cress).